Consider the following 221-residue polypeptide: Protein GrpE 1 (221 aa).

Disordered regions lie at residues 1-44 (MTEE…AAAQ) and 192-221 (VAEPQPGAQTVKADEAEAADDKESGGPEEG). The span at 26-44 (KAAPSEGAAPAGDAAAAAQ) shows a compositional bias: low complexity. Over residues 203–221 (KADEAEAADDKESGGPEEG) the composition is skewed to basic and acidic residues.

It belongs to the GrpE family. In terms of assembly, homodimer.

The protein resides in the cytoplasm. Its function is as follows. Participates actively in the response to hyperosmotic and heat shock by preventing the aggregation of stress-denatured proteins, in association with DnaK and GrpE. It is the nucleotide exchange factor for DnaK and may function as a thermosensor. Unfolded proteins bind initially to DnaJ; upon interaction with the DnaJ-bound protein, DnaK hydrolyzes its bound ATP, resulting in the formation of a stable complex. GrpE releases ADP from DnaK; ATP binding to DnaK triggers the release of the substrate protein, thus completing the reaction cycle. Several rounds of ATP-dependent interactions between DnaJ, DnaK and GrpE are required for fully efficient folding. This is Protein GrpE 1 from Streptomyces avermitilis (strain ATCC 31267 / DSM 46492 / JCM 5070 / NBRC 14893 / NCIMB 12804 / NRRL 8165 / MA-4680).